The following is a 196-amino-acid chain: Putative HTH-type transcriptional regulator protein PtxE (196 aa).

The 59-residue stretch at 1–59 (MLNPVWLKSLVAIVQTGSFQSAARALGLAQPTVSQHLQKLEEQVGVTLVQRSRSGCQPT) folds into the HTH lysR-type domain. The H-T-H motif DNA-binding region spans 19 to 38 (FQSAARALGLAQPTVSQHLQ).

It belongs to the LysR transcriptional regulatory family.

The protein is Putative HTH-type transcriptional regulator protein PtxE (ptxE) of Stutzerimonas stutzeri (Pseudomonas stutzeri).